Consider the following 485-residue polypeptide: Aspartyl/glutamyl-tRNA(Asn/Gln) amidotransferase subunit B (485 aa).

It belongs to the GatB/GatE family. GatB subfamily. In terms of assembly, heterotrimer of A, B and C subunits.

The enzyme catalyses L-glutamyl-tRNA(Gln) + L-glutamine + ATP + H2O = L-glutaminyl-tRNA(Gln) + L-glutamate + ADP + phosphate + H(+). It carries out the reaction L-aspartyl-tRNA(Asn) + L-glutamine + ATP + H2O = L-asparaginyl-tRNA(Asn) + L-glutamate + ADP + phosphate + 2 H(+). Functionally, allows the formation of correctly charged Asn-tRNA(Asn) or Gln-tRNA(Gln) through the transamidation of misacylated Asp-tRNA(Asn) or Glu-tRNA(Gln) in organisms which lack either or both of asparaginyl-tRNA or glutaminyl-tRNA synthetases. The reaction takes place in the presence of glutamine and ATP through an activated phospho-Asp-tRNA(Asn) or phospho-Glu-tRNA(Gln). The polypeptide is Aspartyl/glutamyl-tRNA(Asn/Gln) amidotransferase subunit B (Opitutus terrae (strain DSM 11246 / JCM 15787 / PB90-1)).